The chain runs to 105 residues: Large ribosomal subunit protein eL42z/eL42y (105 aa).

Positions 28–57 (YKKGKDSLAAQGKRRYDRKQSGYGGQTKPV) are disordered.

This sequence belongs to the eukaryotic ribosomal protein eL42 family.

This Arabidopsis thaliana (Mouse-ear cress) protein is Large ribosomal subunit protein eL42z/eL42y (RPL36AA).